The chain runs to 453 residues: Putative F-box/FBD/LRR-repeat protein At1g66290 (453 aa).

The interval 1 to 28 (MDEDGERRVRTKRSCSPESSDNGSGDEV) is disordered. Over residues 14–23 (SCSPESSDNG) the composition is skewed to polar residues. An F-box domain is found at 28 to 81 (VDWISDLPEALIVLVLLNLPTKDVIKTSVLSTKWRNIWRYVPRLDLDNRHFTEF). LRR repeat units lie at residues 155 to 179 (SLKL…VLVL), 210 to 235 (LDNV…SSKS), 246 to 269 (APKL…NLSS), 305 to 329 (LSRV…RCEP), and 358 to 381 (CSNL…IISE). The FBD domain occupies 373-423 (RKRTSIISEPRCLLSSLEYVKIEFALDKGKMELVRYLLENSPILKKLTLSL).

The polypeptide is Putative F-box/FBD/LRR-repeat protein At1g66290 (Arabidopsis thaliana (Mouse-ear cress)).